The sequence spans 433 residues: 3-phosphoshikimate 1-carboxyvinyltransferase (433 aa).

3-phosphoshikimate-binding residues include Lys-20, Ser-21, and Arg-25. Residue Lys-20 participates in phosphoenolpyruvate binding. 2 residues coordinate phosphoenolpyruvate: Gly-92 and Arg-121. 3-phosphoshikimate-binding residues include Ser-167, Ser-168, Gln-169, Ser-195, Asp-315, and Lys-342. A phosphoenolpyruvate-binding site is contributed by Gln-169. Residue Asp-315 is the Proton acceptor of the active site. Phosphoenolpyruvate is bound by residues Arg-346 and Arg-388.

Belongs to the EPSP synthase family. As to quaternary structure, monomer.

It localises to the cytoplasm. The catalysed reaction is 3-phosphoshikimate + phosphoenolpyruvate = 5-O-(1-carboxyvinyl)-3-phosphoshikimate + phosphate. Its pathway is metabolic intermediate biosynthesis; chorismate biosynthesis. Catalyzes the transfer of the enolpyruvyl moiety of phosphoenolpyruvate (PEP) to the 5-hydroxyl of shikimate-3-phosphate (S3P) to produce enolpyruvyl shikimate-3-phosphate and inorganic phosphate. This chain is 3-phosphoshikimate 1-carboxyvinyltransferase, found in Methanococcus aeolicus (strain ATCC BAA-1280 / DSM 17508 / OCM 812 / Nankai-3).